Here is a 1178-residue protein sequence, read N- to C-terminus: DNA-directed RNA polymerase subunit beta (1178 aa).

Residues 1–37 (MLEGCILADSRQSKTAASPSPSRPQSSSNNSVPGAPN) form a disordered region. The span at 18 to 33 (SPSPSRPQSSSNNSVP) shows a compositional bias: low complexity.

Belongs to the RNA polymerase beta chain family. As to quaternary structure, the RNAP catalytic core consists of 2 alpha, 1 beta, 1 beta' and 1 omega subunit. When a sigma factor is associated with the core the holoenzyme is formed, which can initiate transcription.

It catalyses the reaction RNA(n) + a ribonucleoside 5'-triphosphate = RNA(n+1) + diphosphate. DNA-dependent RNA polymerase catalyzes the transcription of DNA into RNA using the four ribonucleoside triphosphates as substrates. This Mycobacterium tuberculosis (strain CDC 1551 / Oshkosh) protein is DNA-directed RNA polymerase subunit beta.